We begin with the raw amino-acid sequence, 212 residues long: MTKMLVLYYSSYGHIEAMAKAVANGAKQAGATVALKRVPELVPEAVARSSGYRLGQEAPIATVAELADYDAIVIGTPTRFGNMASQMKNFLDQTGGLWAENKLVGKVGSVFTSTGSQHGGQESTILSTHVVMLHLGMVIVGLPYSFKGQMRMDEITGGSPYGASTLAEDENHRDRSPSANELDGARFQGRHVAEVAAAMQLGRSHLQPELVR.

The 189-residue stretch at 4 to 192 (MLVLYYSSYG…DGARFQGRHV (189 aa)) folds into the Flavodoxin-like domain. Residues 10 to 15 (SSYGHI) and 78 to 80 (TRF) each bind FMN. Tyrosine 12 contributes to the NAD(+) binding site. Tryptophan 98 provides a ligand contact to substrate. Residues 113-119 (STGSQHG) and histidine 134 each bind FMN. The segment at 161-182 (YGASTLAEDENHRDRSPSANEL) is disordered.

The protein belongs to the WrbA family. FMN serves as cofactor.

The enzyme catalyses a quinone + NADH + H(+) = a quinol + NAD(+). The catalysed reaction is a quinone + NADPH + H(+) = a quinol + NADP(+). This chain is NAD(P)H dehydrogenase (quinone) 3, found in Rhizobium meliloti (strain 1021) (Ensifer meliloti).